Consider the following 188-residue polypeptide: ATP synthase subunit b (188 aa).

The helical transmembrane segment at 21–41 (ILPHLGELIVGIIFAIIIYAV) threads the bilayer.

Belongs to the ATPase B chain family. F-type ATPases have 2 components, F(1) - the catalytic core - and F(0) - the membrane proton channel. F(1) has five subunits: alpha(3), beta(3), gamma(1), delta(1), epsilon(1). F(0) has three main subunits: a(1), b(2) and c(10-14). The alpha and beta chains form an alternating ring which encloses part of the gamma chain. F(1) is attached to F(0) by a central stalk formed by the gamma and epsilon chains, while a peripheral stalk is formed by the delta and b chains.

Its subcellular location is the cell membrane. F(1)F(0) ATP synthase produces ATP from ADP in the presence of a proton or sodium gradient. F-type ATPases consist of two structural domains, F(1) containing the extramembraneous catalytic core and F(0) containing the membrane proton channel, linked together by a central stalk and a peripheral stalk. During catalysis, ATP synthesis in the catalytic domain of F(1) is coupled via a rotary mechanism of the central stalk subunits to proton translocation. In terms of biological role, component of the F(0) channel, it forms part of the peripheral stalk, linking F(1) to F(0). The sequence is that of ATP synthase subunit b from Kineococcus radiotolerans (strain ATCC BAA-149 / DSM 14245 / SRS30216).